We begin with the raw amino-acid sequence, 746 residues long: Eukaryotic translation initiation factor 3 subunit B (746 aa).

Basic and acidic residues predominate over residues 1–11 (MAPSYEHLREA). The tract at residues 1–20 (MAPSYEHLREADLDEDEFDE) is disordered. The region spanning 42–128 (TFVVIDGLPE…HTLRVNKLMD (87 aa)) is the RRM domain. WD repeat units lie at residues 195-234 (DRPN…RLGR), 247-294 (PQEN…RSFA), 307-346 (PRKH…LLDK), 349-386 (IKVE…IGSN), 458-500 (TIKD…FFCP), 517-560 (LDKR…EKPE), and 575-620 (ADHY…LREE).

Belongs to the eIF-3 subunit B family. In terms of assembly, component of the eukaryotic translation initiation factor 3 (eIF-3) complex.

The protein resides in the cytoplasm. RNA-binding component of the eukaryotic translation initiation factor 3 (eIF-3) complex, which is involved in protein synthesis of a specialized repertoire of mRNAs and, together with other initiation factors, stimulates binding of mRNA and methionyl-tRNAi to the 40S ribosome. The eIF-3 complex specifically targets and initiates translation of a subset of mRNAs involved in cell proliferation. The sequence is that of Eukaryotic translation initiation factor 3 subunit B from Pyricularia oryzae (strain 70-15 / ATCC MYA-4617 / FGSC 8958) (Rice blast fungus).